We begin with the raw amino-acid sequence, 172 residues long: Thioredoxin Y1, chloroplastic (172 aa).

The N-terminal 62 residues, 1-62 (MASISLSSST…SSTTRCTPRR (62 aa)), are a transit peptide targeting the chloroplast. The 107-residue stretch at 63–169 (IEAKKQTFDS…LIQRIEDSLK (107 aa)) folds into the Thioredoxin domain. Catalysis depends on nucleophile residues Cys-93 and Cys-96. A disulfide bond links Cys-93 and Cys-96.

Belongs to the thioredoxin family. Plant Y-type subfamily. In terms of tissue distribution, expressed in roots and seeds.

The protein localises to the plastid. The protein resides in the chloroplast stroma. In terms of biological role, thiol-disulfide oxidoreductase that poorly activates chloroplastic malate dehydrogenase (NADP-MDH) and fructose-1,6-bisphosphatase. Provides reducing equivalents for peroxiredoxin Q. The sequence is that of Thioredoxin Y1, chloroplastic from Arabidopsis thaliana (Mouse-ear cress).